A 236-amino-acid chain; its full sequence is Peptidase E (236 aa).

Catalysis depends on charge relay system residues Ser-122, Asp-137, and His-159.

This sequence belongs to the peptidase S51 family.

It is found in the cytoplasm. The catalysed reaction is Dipeptidase E catalyzes the hydrolysis of dipeptides Asp-|-Xaa. It does not act on peptides with N-terminal Glu, Asn or Gln, nor does it cleave isoaspartyl peptides.. Hydrolyzes dipeptides containing N-terminal aspartate residues. May play a role in allowing the cell to use peptide aspartate to spare carbon otherwise required for the synthesis of the aspartate family of amino acids. The protein is Peptidase E of Shewanella sp. (strain W3-18-1).